Consider the following 35-residue polypeptide: Photosystem II reaction center protein T (35 aa).

The helical transmembrane segment at 3 to 23 threads the bilayer; it reads AFAYTLLMTLVVATLFFAVAF.

This sequence belongs to the PsbT family. As to quaternary structure, PSII is composed of 1 copy each of membrane proteins PsbA, PsbB, PsbC, PsbD, PsbE, PsbF, PsbH, PsbI, PsbJ, PsbK, PsbL, PsbM, PsbT, PsbX, PsbY, Psb30/Ycf12, peripheral proteins PsbO, CyanoQ (PsbQ), PsbU, PsbV and a large number of cofactors. It forms dimeric complexes.

The protein resides in the cellular thylakoid membrane. Found at the monomer-monomer interface of the photosystem II (PS II) dimer, plays a role in assembly and dimerization of PSII. PSII is a light-driven water plastoquinone oxidoreductase, using light energy to abstract electrons from H(2)O, generating a proton gradient subsequently used for ATP formation. The protein is Photosystem II reaction center protein T of Prochlorococcus marinus (strain MIT 9303).